Here is a 353-residue protein sequence, read N- to C-terminus: Photosystem II protein D1 (353 aa).

Thr2 carries the post-translational modification N-acetylthreonine. At Thr2 the chain carries Phosphothreonine. The next 3 helical transmembrane spans lie at 29 to 46, 118 to 133, and 142 to 156; these read YIGWFGVLMIPTLLTATS, HFLLGVACYMGREWEL, and WIAVAYSAPVAAATA. Position 118 (His118) interacts with chlorophyll a. Position 126 (Tyr126) interacts with pheophytin a. Asp170 and Glu189 together coordinate [CaMn4O5] cluster. The chain crosses the membrane as a helical span at residues 197–218; it reads FHMLGVAGVFGGSLFSAMHGSL. His198 lines the chlorophyll a pocket. Residues His215 and 264–265 contribute to the a quinone site; that span reads SF. A Fe cation-binding site is contributed by His215. Fe cation is bound at residue His272. A helical membrane pass occupies residues 274–288; that stretch reads FLTAWPVVGIWFTAL. Positions 332, 333, 342, and 344 each coordinate [CaMn4O5] cluster. The propeptide occupies 345–353; sequence VVEAPSTNG.

The protein belongs to the reaction center PufL/M/PsbA/D family. PSII is composed of 1 copy each of membrane proteins PsbA, PsbB, PsbC, PsbD, PsbE, PsbF, PsbH, PsbI, PsbJ, PsbK, PsbL, PsbM, PsbT, PsbX, PsbY, PsbZ, Psb30/Ycf12, at least 3 peripheral proteins of the oxygen-evolving complex and a large number of cofactors. It forms dimeric complexes. The cofactor is The D1/D2 heterodimer binds P680, chlorophylls that are the primary electron donor of PSII, and subsequent electron acceptors. It shares a non-heme iron and each subunit binds pheophytin, quinone, additional chlorophylls, carotenoids and lipids. D1 provides most of the ligands for the Mn4-Ca-O5 cluster of the oxygen-evolving complex (OEC). There is also a Cl(-1) ion associated with D1 and D2, which is required for oxygen evolution. The PSII complex binds additional chlorophylls, carotenoids and specific lipids.. Tyr-161 forms a radical intermediate that is referred to as redox-active TyrZ, YZ or Y-Z. Post-translationally, C-terminally processed by CTPA; processing is essential to allow assembly of the oxygen-evolving complex and thus photosynthetic growth.

The protein localises to the plastid. Its subcellular location is the chloroplast thylakoid membrane. The catalysed reaction is 2 a plastoquinone + 4 hnu + 2 H2O = 2 a plastoquinol + O2. Functionally, photosystem II (PSII) is a light-driven water:plastoquinone oxidoreductase that uses light energy to abstract electrons from H(2)O, generating O(2) and a proton gradient subsequently used for ATP formation. It consists of a core antenna complex that captures photons, and an electron transfer chain that converts photonic excitation into a charge separation. The D1/D2 (PsbA/PsbD) reaction center heterodimer binds P680, the primary electron donor of PSII as well as several subsequent electron acceptors. This Aethionema cordifolium (Lebanon stonecress) protein is Photosystem II protein D1.